Reading from the N-terminus, the 311-residue chain is Acyl-CoA dehydrogenase IpdE2 (311 aa).

FAD contacts are provided by R206 and G273.

The protein belongs to the acyl-CoA dehydrogenase family. Heterotetramer composed of 2 IpdE1 subunits and 2 IpdE2 subunits. The cofactor is FAD.

The enzyme catalyses 3-[(3aS,4S,5R,7aS)-5-hydroxy-7a-methyl-1-oxo-octahydro-1H-inden-4-yl]propanoyl-CoA + A = (2E)-3-[(3aS,4S,5R,7aS)-5-hydroxy-7a-methyl-1-oxo-octahydro-1H-inden-4-yl]prop-2-enoyl-CoA + AH2. Its pathway is steroid metabolism; cholesterol degradation. Involved in cholesterol degradation. Catalyzes the dehydrogenation of 5OH-HIP-CoA to 5OH-HIPE-CoA. The polypeptide is Acyl-CoA dehydrogenase IpdE2 (Mycolicibacterium smegmatis (strain ATCC 700084 / mc(2)155) (Mycobacterium smegmatis)).